A 303-amino-acid chain; its full sequence is MVHIMFNQAAQELTTIRDVLRFAVSRFNEAGLFFGHGTDNAHDEAAYLILHTLNLPLDMLAPYLDAKLLEAEKEEVLTVIERRAVEHIPAAYLTHQAWQGEFDFYVDERVIIPRSFIYELLGDGLRPWIEYDELVHNALDLCTGSGCLAIQMAHHYPDAQIDAVDVSLDALEVAGINVEDYGLEERIRLIHTDLFEGLEGTYDLIVSNPPYVDAESVELLPEEYLHEPELALGSGADGLDATRQILLNAAKFLNPKGVLLVEIGHNRDVLEAAYPELPFTWLETSGGDGFVFLLTREQLLGEE.

It belongs to the protein N5-glutamine methyltransferase family. PrmB subfamily.

It carries out the reaction L-glutaminyl-[ribosomal protein uL3] + S-adenosyl-L-methionine = N(5)-methyl-L-glutaminyl-[ribosomal protein uL3] + S-adenosyl-L-homocysteine + H(+). Methylates large ribosomal subunit protein uL3 on a specific glutamine residue. The chain is Ribosomal protein uL3 glutamine methyltransferase from Neisseria meningitidis serogroup A / serotype 4A (strain DSM 15465 / Z2491).